Reading from the N-terminus, the 303-residue chain is Proline dehydrogenase 2 (303 aa).

Position 96 (Lys96) interacts with substrate. The active site involves Asp130. Residues Met131 and Gln159 each contribute to the FAD site. Residue Arg180 is part of the active site. FAD-binding positions include 183-185 (KGA) and 222-223 (TH). 284 to 285 (RR) contributes to the substrate binding site.

The protein belongs to the proline dehydrogenase family. It depends on FAD as a cofactor.

It catalyses the reaction L-proline + a quinone = (S)-1-pyrroline-5-carboxylate + a quinol + H(+). It functions in the pathway amino-acid degradation; L-proline degradation into L-glutamate; L-glutamate from L-proline: step 1/2. Functionally, converts proline to delta-1-pyrroline-5-carboxylate. Important for the use of proline as a sole carbon and energy source or a sole nitrogen source. The polypeptide is Proline dehydrogenase 2 (Bacillus subtilis (strain 168)).